A 279-amino-acid polypeptide reads, in one-letter code: NAD kinase (279 aa).

Asp61 acts as the Proton acceptor in catalysis. Residues 61 to 62 (DG), 138 to 139 (ND), Lys149, Lys166, Asp168, and 179 to 184 (TGYSFS) contribute to the NAD(+) site.

This sequence belongs to the NAD kinase family. A divalent metal cation serves as cofactor.

It is found in the cytoplasm. It carries out the reaction NAD(+) + ATP = ADP + NADP(+) + H(+). Involved in the regulation of the intracellular balance of NAD and NADP, and is a key enzyme in the biosynthesis of NADP. Catalyzes specifically the phosphorylation on 2'-hydroxyl of the adenosine moiety of NAD to yield NADP. In Borreliella burgdorferi (strain ATCC 35210 / DSM 4680 / CIP 102532 / B31) (Borrelia burgdorferi), this protein is NAD kinase.